The sequence spans 267 residues: GTP cyclohydrolase FolE2 (267 aa).

Belongs to the GTP cyclohydrolase IV family.

The catalysed reaction is GTP + H2O = 7,8-dihydroneopterin 3'-triphosphate + formate + H(+). It functions in the pathway cofactor biosynthesis; 7,8-dihydroneopterin triphosphate biosynthesis; 7,8-dihydroneopterin triphosphate from GTP: step 1/1. Its function is as follows. Converts GTP to 7,8-dihydroneopterin triphosphate. The chain is GTP cyclohydrolase FolE2 from Geobacter sp. (strain M21).